The chain runs to 1613 residues: MIPMIYKEMCPNCNGEITSERLAIGVCEKCLKEENVFEKLKLCEKLREEKTLKNLKDYCIIWNEFKEFEEFVKDLGFELLSIQKMWAKRVLKNKSFSIVVPTGVGKSFFGILMSLFLAKKGKRCYIILPTTLLVKQTYEKISSLTEKNNLNIRVVAYHSELSTKEKKEVKERIENNDYDVLITTSNYLTKNMPKCKFDFVFVDDVDALLKASKNIDRTLKLLGFDEEIINEAYKIIYLIKIGKIEDAMKKREILKKKISKIKHGCLIIASATGKSYGDRVKLYRELLDFEIGFGMNKLRDVVDIYDEEFSKEKILEYIKLFGSGGIVFVSIDYGVEKAQEIEKYLLENNIKAKLIHSKDKKGFDDFREGKIDVLIGVASYYGVLVRGLDMPERVRYAIFYGIPKFKIRLKEYINSLKEKGELKEDINIEGKTEEEIRQIITEKLKIKNFSLRKEDDEYLLLIPDVKTYIQASGRTSRMTEFGLTKGASIVLVDEKEIFEALKKYMLFMYESEFKRIDEVNLEELIKKIDEDREKIKVGRAKGKVPDLLKSVLMVVESPNKARTIANFFGKPSVRKINNRNVYEVCIGDLNLIITASGGHVFDLVTKEGFYGVKIENNLYIPIYTSIKKVNGEQFTDQKDLEELIKQLMEKGERVNAMDAKENIEIIREIADEVDAIFIATDIDTEGEKIGYDIAINALPFNRNIYRVGFNEITKRAILKAVESFKKGEELSLDENKVKGQVVRRIEDRWIGFRLSQKLWEVFNKNYLSAGRVQTPVLGWIIERYNEHKIKVPYLSLKLENDIYIGKIWEDEFDKDEVEVEVKVYEKEIPPLPPFTTDTLLEEATKRFGLSTDEIMSIAQELFELGLCLTPDTYVVLGDGRIETIEDIVNAKERNVLSLDLDNLSIKIDTAIKFWKLRYNGNLSKITLSNNYELKATPDHCLLVLRDNQLKWIPAKDIKENDYIAMPFNYKVERKPISLLNLLKYLDITDVLIEFDENSTIFEKIAEYIRNNIKTSTKYKYLRNRRVPLKYLIEWNFDLDEIEKEAKYIYKSVAGTKKIPLFKLDERFWYFAGLVLGDGSIQDSKIRIAQTPLKDVKSILDETFPFLHNWISGNQVIISNPIIAEILEKLGMRNGKLNGIIFSLPESYINALIAGYFDTDGCFSLLYDKKAKKHNLRMVLTSKRRDVLEKIGIYLNSIGILNTLHKSREVYSLIISNKSLETFKEKIAKYLKIRKEAFINGYKTYKKEHEERFECDLLPVKEVFKKLTFEKGRKEILKDSKIHIENWYKEKTNNIPREKLKTVLRYANNSEHKEFLEKIVNGDISFVRVKKVENIPYDGYVYDLSIKHNQNFISNGVISHNCTYHRTSSTRVSLDGMRVAREYLKLNNLEDYLKNREYFMEGAHECIRPTKPMNTDELIEFLKENNIKLTKNHIKVYDLIFRRFIASQMKEAVVEYEEIYIKDLDEKVEGYVDIKFDGWSRIYNLKLKKLPRIEKSSLKVLDKKLRKIPKVPLYDEGEVVKLMKERGIGRPSTYAQIIKKLLDRGYVVKSKDKNKLIPTKLGIEVYNYLINNYPHLISEERTRELEEIMDKIENGEVDYIEVLKALHEEILSIR.

Residues 1 to 38 (MIPMIYKEMCPNCNGEITSERLAIGVCEKCLKEENVFE) form an RG N-terminal-type zinc finger. Positions 10, 13, 27, and 30 each coordinate Zn(2+). Residues Gln83 and 100-107 (VPTGVGKS) each bind ATP. In terms of domain architecture, Helicase ATP-binding spans 87 to 291 (AKRVLKNKSF…LYRELLDFEI (205 aa)). The short motif at 203-206 (DDVD) is the DEAD box element. Residues 310–525 (SKEKILEYIK…IDEVNLEELI (216 aa)) enclose the Helicase C-terminal domain. The topoisomerase I stretch occupies residues 546–1613 (DLLKSVLMVV…ALHEEILSIR (1068 aa)). Residues 550–712 (SVLMVVESPN…NIYRVGFNEI (163 aa)) enclose the Toprim domain. The Mg(2+) site is built by Glu556 and Asp681. One can recognise a Topo IA-type catalytic domain in the interval 733-1613 (DENKVKGQVV…ALHEEILSIR (881 aa)). One can recognise a DOD-type homing endonuclease domain in the interval 1070–1199 (FAGLVLGDGS…IGIYLNSIGI (130 aa)). Tyr1363 acts as the O-(5'-phospho-DNA)-tyrosine intermediate in catalysis.

The protein in the N-terminal section; belongs to the DEAD box helicase family. DDVD subfamily. In the C-terminal section; belongs to the type IA topoisomerase family. As to quaternary structure, monomer. Requires Zn(2+) as cofactor. Mg(2+) serves as cofactor. In terms of processing, this protein undergoes a protein self splicing that involves a post-translational excision of the intervening region (intein) followed by peptide ligation.

Its subcellular location is the cytoplasm. The catalysed reaction is ATP + H2O = ADP + phosphate + H(+). Functionally, modifies the topological state of DNA by introducing positive supercoils in an ATP-dependent process, increasing the linking number in steps of +1. Binds to single-stranded DNA, transiently cleaves and then rejoins the ends, introducing a positive supercoil in the process. The scissile phosphodiester is attacked by the catalytic tyrosine of the enzyme, resulting in the formation of a DNA-(5'-phosphotyrosyl)-enzyme intermediate. Probably involved in rewinding DNA strands in regions of the chromosome that have opened up to allow replication, transcription, DNA repair and/or for DNA protection. The polypeptide is Reverse gyrase (Methanocaldococcus jannaschii (strain ATCC 43067 / DSM 2661 / JAL-1 / JCM 10045 / NBRC 100440) (Methanococcus jannaschii)).